The following is an 865-amino-acid chain: Aconitate hydratase B (865 aa).

Substrate contacts are provided by residues arginine 191, 244–246 (SSR), 414–416 (QDT), and serine 498. Cysteine 710, cysteine 769, and cysteine 772 together coordinate [4Fe-4S] cluster. Residues arginine 791 and arginine 796 each contribute to the substrate site.

Belongs to the aconitase/IPM isomerase family. As to quaternary structure, monomer. Requires [4Fe-4S] cluster as cofactor.

The enzyme catalyses citrate = D-threo-isocitrate. The catalysed reaction is (2S,3R)-3-hydroxybutane-1,2,3-tricarboxylate = 2-methyl-cis-aconitate + H2O. It functions in the pathway carbohydrate metabolism; tricarboxylic acid cycle; isocitrate from oxaloacetate: step 2/2. It participates in organic acid metabolism; propanoate degradation. Its function is as follows. Involved in the catabolism of short chain fatty acids (SCFA) via the tricarboxylic acid (TCA)(acetyl degradation route) and the 2-methylcitrate cycle I (propionate degradation route). Catalyzes the reversible isomerization of citrate to isocitrate via cis-aconitate. Also catalyzes the hydration of 2-methyl-cis-aconitate to yield (2R,3S)-2-methylisocitrate. The apo form of AcnB functions as a RNA-binding regulatory protein which regulates FliC synthesis via interaction with the ftsH transcript to decrease the intracellular levels of FtsH. The lower levels of FtsH protease activity then influence sigma-32, DnaK and ultimately FliC production. The protein is Aconitate hydratase B (acnB) of Salmonella typhimurium (strain LT2 / SGSC1412 / ATCC 700720).